The sequence spans 302 residues: RELT-like protein 2 (302 aa).

Residues leucine 15–isoleucine 35 traverse the membrane as a helical segment. Disordered regions lie at residues arginine 47–asparagine 68, cysteine 135–phenylalanine 164, arginine 177–arginine 212, and valine 247–methionine 302. A Phosphoserine modification is found at serine 52. Basic and acidic residues-rich tracts occupy residues arginine 148 to proline 158 and arginine 177 to proline 188. Residues glutamine 277–serine 294 show a composition bias toward polar residues.

It belongs to the RELT family. Interacts with RELT, RELL1, OXSR1, PLSCR1 and TRAF2.

It localises to the cell membrane. In terms of biological role, induces activation of MAPK14/p38 cascade, when overexpressed. Induces apoptosis, when overexpressed. The chain is RELT-like protein 2 (Rell2) from Rattus norvegicus (Rat).